The sequence spans 550 residues: Palmitoyltransferase PFA3 (550 aa).

The Cytoplasmic portion of the chain corresponds to 1–21; the sequence is MASARRWARKAERCCCTFATY. The chain crosses the membrane as a helical span at residues 22 to 42; sequence FPLAFVYGLTSWAVWVVVNIG. Topologically, residues 43-56 are extracellular; sequence SVSTKSSWIGTGSS. The chain crosses the membrane as a helical span at residues 57-77; it reads IVGVALYVMLNWCYTTAVFTP. At 78 to 153 the chain is on the cytoplasmic side; the sequence is PGSTTNDMGY…ATCIGLRNHK (76 aa). A DHHC domain is found at 110–160; that stretch reads RFCKKCQARKPDRAHHCSTCRRCVLKMDHHCPWLATCIGLRNHKAFLLFLI. Residues 154-174 form a helical membrane-spanning segment; it reads AFLLFLIYTSLFCFWSFAVSA. At 175–190 the chain is on the extracellular side; it reads CWVWYEALNDQEYIDS. Residues 191–211 traverse the membrane as a helical segment; that stretch reads FLPVNFIMLSVISGIIGLVVG. Topologically, residues 212 to 550 are cytoplasmic; the sequence is AFTSWHIHLA…TPKFQDEGVD (339 aa). 3 disordered regions span residues 272–304, 378–422, and 434–550; these read ITRP…AQRE, REQQ…PKTM, and NLYA…EGVD. The span at 274–285 shows a compositional bias: basic and acidic residues; it reads RPEEGEERREMP. Residues 457-470 show a composition bias toward acidic residues; that stretch reads DELADLDTDDEDGF. The segment covering 491–502 has biased composition (basic and acidic residues); it reads DSHRRDDAEARA. Polar residues predominate over residues 523–542; the sequence is GSSQSTPTRTPSNLSRSGTP.

It belongs to the DHHC palmitoyltransferase family. PFA3 subfamily. Autopalmitoylated.

Its subcellular location is the vacuole membrane. It catalyses the reaction L-cysteinyl-[protein] + hexadecanoyl-CoA = S-hexadecanoyl-L-cysteinyl-[protein] + CoA. Its function is as follows. Palmitoyltransferase specific for VAC8. Palmitoylates VAC8 at one or more of its N-terminal cysteine residues, which is required for its proper membrane localization. This chain is Palmitoyltransferase PFA3 (PFA3), found in Gibberella zeae (strain ATCC MYA-4620 / CBS 123657 / FGSC 9075 / NRRL 31084 / PH-1) (Wheat head blight fungus).